The chain runs to 412 residues: ATP phosphoribosyltransferase regulatory subunit (412 aa).

This sequence belongs to the class-II aminoacyl-tRNA synthetase family. HisZ subfamily. Heteromultimer composed of HisG and HisZ subunits.

The protein resides in the cytoplasm. It functions in the pathway amino-acid biosynthesis; L-histidine biosynthesis; L-histidine from 5-phospho-alpha-D-ribose 1-diphosphate: step 1/9. Functionally, required for the first step of histidine biosynthesis. May allow the feedback regulation of ATP phosphoribosyltransferase activity by histidine. The polypeptide is ATP phosphoribosyltransferase regulatory subunit (Dehalococcoides mccartyi (strain ATCC BAA-2266 / KCTC 15142 / 195) (Dehalococcoides ethenogenes (strain 195))).